A 513-amino-acid chain; its full sequence is Histidine ammonia-lyase (513 aa).

The segment at residues 142 to 144 is a cross-link (5-imidazolinone (Ala-Gly)); the sequence is ASG. Residue serine 143 is modified to 2,3-didehydroalanine (Ser).

This sequence belongs to the PAL/histidase family. Contains an active site 4-methylidene-imidazol-5-one (MIO), which is formed autocatalytically by cyclization and dehydration of residues Ala-Ser-Gly.

Its subcellular location is the cytoplasm. The enzyme catalyses L-histidine = trans-urocanate + NH4(+). The protein operates within amino-acid degradation; L-histidine degradation into L-glutamate; N-formimidoyl-L-glutamate from L-histidine: step 1/3. This is Histidine ammonia-lyase from Mesorhizobium japonicum (strain LMG 29417 / CECT 9101 / MAFF 303099) (Mesorhizobium loti (strain MAFF 303099)).